A 298-amino-acid chain; its full sequence is Protoheme IX farnesyltransferase (298 aa).

Transmembrane regions (helical) follow at residues 28-48, 50-70, 95-117, 121-138, 149-169, 176-196, 222-242, 243-263, and 274-294; these read VVAL…EELV, LKVL…AAAI, LSPA…TLYA, PLTA…AVVY, NIVI…TSVT, AVLL…ALAV, CIFL…LIGM, TGMI…AYAW, and AFNM…ILLV.

This sequence belongs to the UbiA prenyltransferase family. Protoheme IX farnesyltransferase subfamily.

It localises to the cell inner membrane. The enzyme catalyses heme b + (2E,6E)-farnesyl diphosphate + H2O = Fe(II)-heme o + diphosphate. The protein operates within porphyrin-containing compound metabolism; heme O biosynthesis; heme O from protoheme: step 1/1. Functionally, converts heme B (protoheme IX) to heme O by substitution of the vinyl group on carbon 2 of heme B porphyrin ring with a hydroxyethyl farnesyl side group. This Idiomarina loihiensis (strain ATCC BAA-735 / DSM 15497 / L2-TR) protein is Protoheme IX farnesyltransferase.